The sequence spans 95 residues: Co-chaperonin GroES (95 aa).

The protein belongs to the GroES chaperonin family. As to quaternary structure, heptamer of 7 subunits arranged in a ring. Interacts with the chaperonin GroEL.

It localises to the cytoplasm. In terms of biological role, together with the chaperonin GroEL, plays an essential role in assisting protein folding. The GroEL-GroES system forms a nano-cage that allows encapsulation of the non-native substrate proteins and provides a physical environment optimized to promote and accelerate protein folding. GroES binds to the apical surface of the GroEL ring, thereby capping the opening of the GroEL channel. The polypeptide is Co-chaperonin GroES (Zymomonas mobilis subsp. mobilis (strain ATCC 31821 / ZM4 / CP4)).